A 94-amino-acid polypeptide reads, in one-letter code: MPRSLKKSFFVDRHLLKKVEKSAENNKDKKPIRTWSRRSTIFPEMIGLTIAIHNGRLHVPVFISDEMVSHKLGEFAPTRTYRGHVAADRKAKKR.

The protein belongs to the universal ribosomal protein uS19 family.

Functionally, protein S19 forms a complex with S13 that binds strongly to the 16S ribosomal RNA. In Hamiltonella defensa subsp. Acyrthosiphon pisum (strain 5AT), this protein is Small ribosomal subunit protein uS19.